Consider the following 355-residue polypeptide: Fructose-1,6-bisphosphatase class 1 (355 aa).

Mg(2+) contacts are provided by E90, D109, L111, and D112. Residues 112–115 (DGSS), N204, and 256–258 (YLY) each bind substrate. E276 lines the Mg(2+) pocket.

It belongs to the FBPase class 1 family. As to quaternary structure, homotetramer. Requires Mg(2+) as cofactor.

It is found in the cytoplasm. The catalysed reaction is beta-D-fructose 1,6-bisphosphate + H2O = beta-D-fructose 6-phosphate + phosphate. The protein operates within carbohydrate biosynthesis; gluconeogenesis. This Acidiphilium cryptum (strain JF-5) protein is Fructose-1,6-bisphosphatase class 1.